A 116-amino-acid polypeptide reads, in one-letter code: MPDPAHIIAGHKAALSNPHVSEEAKERARKYLKEHGSESHYTTGTTRGQKADADDAGELREEGFGTKNQFEDNESQAKNLGNVRGGYKAAMHNPKVSQKGRRHAKELLEEVDDESK.

The segment at 32–116 (LKEHGSESHY…LLEEVDDESK (85 aa)) is disordered. The segment covering 39–48 (SHYTTGTTRG) has biased composition (polar residues). Positions 49 to 64 (QKADADDAGELREEGF) are enriched in basic and acidic residues.

Belongs to the UPF0654 (con-6) family.

The protein localises to the cytoplasm. The protein resides in the nucleus. This chain is UPF0654 protein C869.09, found in Schizosaccharomyces pombe (strain 972 / ATCC 24843) (Fission yeast).